Here is a 412-residue protein sequence, read N- to C-terminus: Yellow-related salivary protein LJM17 (412 aa).

The first 18 residues, 1–18 (MRFFFVFLAIVLFQGIHG), serve as a signal peptide directing secretion. A glycan (N-linked (GlcNAc...) asparagine) is linked at Asn29.

This sequence belongs to the major royal jelly protein family. In terms of tissue distribution, salivary gland.

The protein localises to the secreted. In terms of biological role, probably modulates blood feeding of sand flies on vertebrate species by binding and sequestering different mediators involved in the host response. Binds biogenic amines. Binds serotonin with high affinity. Binds noradrenaline but not adrenaline. Binds dopamine and octopamine. Binds histamine. Inhibits host smooth muscle contraction induced by histamine in bioassay with guinea pig ileum. Immunogenic; elicits antibody production in the host. Functions as a chemoattractant for host neutrophils; likely acts through a G-protein-coupled receptor and effect is dependent on calcium influx. This Lutzomyia longipalpis (Sand fly) protein is Yellow-related salivary protein LJM17.